The sequence spans 352 residues: MTAILERRESASLWARFCEWITSTENRLYIGWFGVLMIPTLLTATSVFIIAFIAAPPVDIDGIREPVSGYLLYGNNIISGAVVPTSNAIGLHFYPIWEAASLDEWLYNGGPYQLIVCHFFLGICCYMGREWELSFRLGMRPWIAVAYSAPVAAATAVFIIYPIGQGSFSDGMPLGISGTFNFMIVFQAEHNILMHPFHMLGVAGVFGGSLFSAMHGSLVTSSLIRETTENESRNAGYKFGQEEETYNIVAAHGYFGRLIFQYASFNNSRSLHFFLAAWPVVGIWFTALGISTMAFNLNGFNFNQSVVDSQGRVINTWADIINRANLGMEVMHERNAHNFPLDLASVEAPSIA.

Thr2 is modified (N-acetylthreonine). Position 2 is a phosphothreonine (Thr2). Helical transmembrane passes span 29 to 46 (YIGWFGVLMIPTLLTATS), 118 to 133 (HFFLGICCYMGREWEL), and 142 to 156 (WIAVAYSAPVAAATA). Residue His118 coordinates chlorophyll a. Tyr126 serves as a coordination point for pheophytin a. Positions 170 and 189 each coordinate [CaMn4O5] cluster. The chain crosses the membrane as a helical span at residues 197 to 218 (FHMLGVAGVFGGSLFSAMHGSL). Residue His198 coordinates chlorophyll a. A quinone-binding positions include His215 and 264–265 (SF). A Fe cation-binding site is contributed by His215. His272 contributes to the Fe cation binding site. Residues 274-288 (FLAAWPVVGIWFTAL) form a helical membrane-spanning segment. Residues His332, Glu333, Asp342, and Ala344 each coordinate [CaMn4O5] cluster. The propeptide occupies 345-352 (SVEAPSIA).

It belongs to the reaction center PufL/M/PsbA/D family. In terms of assembly, PSII is composed of 1 copy each of membrane proteins PsbA, PsbB, PsbC, PsbD, PsbE, PsbF, PsbH, PsbI, PsbJ, PsbK, PsbL, PsbM, PsbT, PsbX, PsbY, PsbZ, Psb30/Ycf12, at least 3 peripheral proteins of the oxygen-evolving complex and a large number of cofactors. It forms dimeric complexes. Requires The D1/D2 heterodimer binds P680, chlorophylls that are the primary electron donor of PSII, and subsequent electron acceptors. It shares a non-heme iron and each subunit binds pheophytin, quinone, additional chlorophylls, carotenoids and lipids. D1 provides most of the ligands for the Mn4-Ca-O5 cluster of the oxygen-evolving complex (OEC). There is also a Cl(-1) ion associated with D1 and D2, which is required for oxygen evolution. The PSII complex binds additional chlorophylls, carotenoids and specific lipids. as cofactor. Post-translationally, tyr-161 forms a radical intermediate that is referred to as redox-active TyrZ, YZ or Y-Z. In terms of processing, C-terminally processed by CTPA; processing is essential to allow assembly of the oxygen-evolving complex and thus photosynthetic growth.

Its subcellular location is the plastid. The protein resides in the chloroplast thylakoid membrane. The catalysed reaction is 2 a plastoquinone + 4 hnu + 2 H2O = 2 a plastoquinol + O2. Photosystem II (PSII) is a light-driven water:plastoquinone oxidoreductase that uses light energy to abstract electrons from H(2)O, generating O(2) and a proton gradient subsequently used for ATP formation. It consists of a core antenna complex that captures photons, and an electron transfer chain that converts photonic excitation into a charge separation. The D1/D2 (PsbA/PsbD) reaction center heterodimer binds P680, the primary electron donor of PSII as well as several subsequent electron acceptors. In Chlorella ellipsoidea, this protein is Photosystem II protein D1.